The following is a 355-amino-acid chain: 3'-5' exonuclease (355 aa).

Positions 1-121 are disordered; the sequence is MDKYLIKLPN…PSPEKEKPEK (121 aa). Composition is skewed to basic and acidic residues over residues 17–29, 36–50, and 72–92; these read VSDKKEVVKKETP, AKKDTPKQEKEKENT, and KNLDTPEVTQEKESVESENPP. 2 positions are modified to phosphoserine: Ser-105 and Ser-113. A 3'-5' exonuclease domain is found at 147–315; the sequence is VMQWVEKQKE…GQVIYRDLEQ (169 aa). Asp-164, Glu-166, and Asp-302 together coordinate Mg(2+).

The protein belongs to the WRNexo family.

It localises to the nucleus. Its function is as follows. Has exonuclease activity on both single-stranded and duplex templates bearing overhangs, but not blunt ended duplex DNA, and cleaves in a 3'-5' direction. Essential for the formation of DNA replication focal centers. Has an important role in maintaining genome stability. This Drosophila ananassae (Fruit fly) protein is 3'-5' exonuclease.